The chain runs to 221 residues: Penicillin-binding protein activator LpoB (221 aa).

The signal sequence occupies residues 1 to 20; the sequence is MLNRMYRYALLATVALALSG. A lipid anchor (N-palmitoyl cysteine) is attached at Cys-21. Cys-21 carries S-diacylglycerol cysteine lipidation. The tract at residues 29–82 is disordered; that stretch reads PAPVEEAQPGTQQPTQPVPPPTQPVPTVPSVPSIPAQPGPIEHQPENATPEPKA. A compositionally biased stretch (pro residues) spans 44–57; sequence QPVPPPTQPVPTVP.

This sequence belongs to the LpoB family. In terms of assembly, interacts with PBP1b.

The protein resides in the cell outer membrane. In terms of biological role, regulator of peptidoglycan synthesis that is essential for the function of penicillin-binding protein 1B (PBP1b). The protein is Penicillin-binding protein activator LpoB of Cronobacter turicensis (strain DSM 18703 / CCUG 55852 / LMG 23827 / z3032).